Reading from the N-terminus, the 495-residue chain is 3-octaprenyl-4-hydroxybenzoate carboxy-lyase (495 aa).

Residue N172 coordinates Mn(2+). Residues 175 to 177 (IYR), 189 to 191 (RWL), and 194 to 195 (RG) each bind prenylated FMN. Position 238 (E238) interacts with Mn(2+). Catalysis depends on D287, which acts as the Proton donor.

Belongs to the UbiD family. Homohexamer. Prenylated FMN serves as cofactor. Requires Mn(2+) as cofactor.

It is found in the cell membrane. The enzyme catalyses a 4-hydroxy-3-(all-trans-polyprenyl)benzoate + H(+) = a 2-(all-trans-polyprenyl)phenol + CO2. It participates in cofactor biosynthesis; ubiquinone biosynthesis. Its function is as follows. Catalyzes the decarboxylation of 3-octaprenyl-4-hydroxy benzoate to 2-octaprenylphenol, an intermediate step in ubiquinone biosynthesis. In Yersinia enterocolitica serotype O:8 / biotype 1B (strain NCTC 13174 / 8081), this protein is 3-octaprenyl-4-hydroxybenzoate carboxy-lyase.